We begin with the raw amino-acid sequence, 238 residues long: ATP-dependent dethiobiotin synthetase BioD (238 aa).

Residue 12-17 (EVGKTV) participates in ATP binding. Residue Thr-16 participates in Mg(2+) binding. Lys-37 is a catalytic residue. Residue Thr-41 participates in substrate binding. Residues Asp-50, 109–112 (EGAG), 170–171 (GS), and 200–202 (PAG) each bind ATP. Residues Asp-50 and Glu-109 each contribute to the Mg(2+) site.

The protein belongs to the dethiobiotin synthetase family. As to quaternary structure, homodimer. Mg(2+) is required as a cofactor.

The protein resides in the cytoplasm. It catalyses the reaction (7R,8S)-7,8-diammoniononanoate + CO2 + ATP = (4R,5S)-dethiobiotin + ADP + phosphate + 3 H(+). The protein operates within cofactor biosynthesis; biotin biosynthesis; biotin from 7,8-diaminononanoate: step 1/2. Functionally, catalyzes a mechanistically unusual reaction, the ATP-dependent insertion of CO2 between the N7 and N8 nitrogen atoms of 7,8-diaminopelargonic acid (DAPA, also called 7,8-diammoniononanoate) to form a ureido ring. The protein is ATP-dependent dethiobiotin synthetase BioD of Parafrankia sp. (strain EAN1pec).